The primary structure comprises 183 residues: UPF0200 protein MmarC7_0527 (183 aa).

Position 8 to 15 (8 to 15) interacts with ATP; the sequence is GMPGSGKS.

The protein belongs to the UPF0200 family.

This chain is UPF0200 protein MmarC7_0527, found in Methanococcus maripaludis (strain C7 / ATCC BAA-1331).